The chain runs to 206 residues: Proteasome subunit beta 1 (206 aa).

A propeptide spans 1–14 (MSRIHNDPKVLLTG) (removed in mature form; by autocatalysis). Catalysis depends on Thr15, which acts as the Nucleophile.

Belongs to the peptidase T1B family. In terms of assembly, the 20S proteasome core is composed of 14 alpha and 14 beta subunits that assemble into four stacked heptameric rings, resulting in a barrel-shaped structure. The two inner rings, each composed of seven catalytic beta subunits, are sandwiched by two outer rings, each composed of seven alpha subunits. The catalytic chamber with the active sites is on the inside of the barrel. Has a gated structure, the ends of the cylinder being occluded by the N-termini of the alpha-subunits. Is capped at one or both ends by the proteasome regulatory ATPase, PAN.

It is found in the cytoplasm. The catalysed reaction is Cleavage of peptide bonds with very broad specificity.. Its activity is regulated as follows. The formation of the proteasomal ATPase PAN-20S proteasome complex, via the docking of the C-termini of PAN into the intersubunit pockets in the alpha-rings, triggers opening of the gate for substrate entry. Interconversion between the open-gate and close-gate conformations leads to a dynamic regulation of the 20S proteasome proteolysis activity. In terms of biological role, component of the proteasome core, a large protease complex with broad specificity involved in protein degradation. This Caldivirga maquilingensis (strain ATCC 700844 / DSM 13496 / JCM 10307 / IC-167) protein is Proteasome subunit beta 1.